The primary structure comprises 419 residues: L-rhamnose isomerase (419 aa).

Mn(2+) contacts are provided by His-262, Asp-294, and Asp-296.

Belongs to the rhamnose isomerase family. In terms of assembly, homotetramer. Requires Mn(2+) as cofactor.

Its subcellular location is the cytoplasm. The catalysed reaction is L-rhamnopyranose = L-rhamnulose. Its pathway is carbohydrate degradation; L-rhamnose degradation; glycerone phosphate from L-rhamnose: step 1/3. Its function is as follows. Catalyzes the interconversion of L-rhamnose and L-rhamnulose. In Salmonella agona (strain SL483), this protein is L-rhamnose isomerase.